We begin with the raw amino-acid sequence, 475 residues long: Capsid scaffolding protein (475 aa).

Catalysis depends on charge relay system residues His-45, Ser-113, and His-132. The interaction with pAP stretch occupies residues Asp-254 to Asp-273. The Nuclear localization signal motif lies at Arg-327–Arg-333. The disordered stretch occupies residues Gln-426 to Ala-454. Positions Ser-455–Lys-475 are interaction with major capsid protein.

It belongs to the herpesviridae capsid scaffolding protein family. In terms of assembly, homomultimer. Interacts with major capsid protein. Exists in a monomer-dimer equilibrium with the dimer being the active species. In terms of processing, capsid scaffolding protein is cleaved by assemblin after formation of the spherical procapsid. As a result, the capsid obtains its mature, icosahedral shape. Cleavages occur at two or more sites: release (R-site) and maturation (M-site).

The protein resides in the host cytoplasm. The protein localises to the host nucleus. The enzyme catalyses Cleaves -Ala-|-Ser- and -Ala-|-Ala- bonds in the scaffold protein.. Functionally, acts as a scaffold protein by binding major capsid protein in the cytoplasm, inducing the nuclear localization of both proteins. Multimerizes in the nucleus such as major capsid protein forms the icosahedral T=16 capsid. Autocatalytic cleavage releases the assembly protein, and subsequently abolishes interaction with major capsid protein. Cleavages products are evicted from the capsid before or during DNA packaging. In terms of biological role, protease that plays an essential role in virion assembly within the nucleus. Catalyzes the cleavage of the assembly protein after formation of the spherical procapsid. By that cleavage, the capsid matures and gains its icosahedral shape. The cleavage sites seem to include -Ala-Ser-, -Ala-Ala-, as well as Ala-Thr bonds. Assemblin and cleavages products are evicted from the capsid before or during DNA packaging. Its function is as follows. Plays a major role in capsid assembly. Acts as a scaffold protein by binding major capsid protein. Multimerizes in the nucleus such as major capsid protein forms the icosahedral T=16 capsid. Cleaved by assemblin after capsid completion. The cleavages products are evicted from the capsid before or during DNA packaging. The chain is Capsid scaffolding protein (17) from Saimiriine herpesvirus 2 (strain 11) (SaHV-2).